The primary structure comprises 117 residues: Cell division protein FtsB (117 aa).

Over 1-6 the chain is Cytoplasmic; the sequence is MRDWRW. Residues 7–24 form a helical membrane-spanning segment; the sequence is MLLVLALLLGWLQYRFWF. Over 25–117 the chain is Periplasmic; sequence GPGNSGEVMM…QVGDHPADVP (93 aa). Residues 29–69 adopt a coiled-coil conformation; sequence SGEVMMLEAQVANQERDNEGLQQRNDALAAEVKDLKEGQSA.

This sequence belongs to the FtsB family. Part of a complex composed of FtsB, FtsL and FtsQ.

It is found in the cell inner membrane. Functionally, essential cell division protein. May link together the upstream cell division proteins, which are predominantly cytoplasmic, with the downstream cell division proteins, which are predominantly periplasmic. The protein is Cell division protein FtsB of Stenotrophomonas maltophilia (strain K279a).